The following is a 384-amino-acid chain: Multidrug/solvent efflux pump periplasmic linker protein MepA (384 aa).

The first 22 residues, 1-22, serve as a signal peptide directing secretion; it reads MQFKPAVTALVSAVALATLLSG. The N-palmitoyl cysteine moiety is linked to residue cysteine 23. A lipid anchor (S-diacylglycerol cysteine) is attached at cysteine 23. The stretch at 115–155 forms a coiled coil; the sequence is LAERYKQLIDEQAVSKQEYDDANAKRLQAEASLKSAQIDLR. The disordered stretch occupies residues 362 to 384; the sequence is ATNVKKPAGPDQANAAKADAKAE. Over residues 368 to 378 the composition is skewed to low complexity; the sequence is PAGPDQANAAK.

It belongs to the membrane fusion protein (MFP) (TC 8.A.1) family.

The protein resides in the cell inner membrane. In terms of biological role, the periplasmic linker protein component of an organic solvent and antibiotic efflux pump; confers resistance to toluene, hexane, p-xylene, ampicillin, penicillin G, erythromycin, novobiocin and tetracycline. The polypeptide is Multidrug/solvent efflux pump periplasmic linker protein MepA (mepA) (Pseudomonas putida (Arthrobacter siderocapsulatus)).